Reading from the N-terminus, the 692-residue chain is Elongation factor G (692 aa).

Positions Glu8–Thr282 constitute a tr-type G domain. Residues Ala17–Thr24, Asp81–His85, and Asn135–Asp138 contribute to the GTP site. The disordered stretch occupies residues Pro285 to Asp304. Residues Val290 to Asp304 show a composition bias toward basic and acidic residues.

This sequence belongs to the TRAFAC class translation factor GTPase superfamily. Classic translation factor GTPase family. EF-G/EF-2 subfamily.

The protein localises to the cytoplasm. Catalyzes the GTP-dependent ribosomal translocation step during translation elongation. During this step, the ribosome changes from the pre-translocational (PRE) to the post-translocational (POST) state as the newly formed A-site-bound peptidyl-tRNA and P-site-bound deacylated tRNA move to the P and E sites, respectively. Catalyzes the coordinated movement of the two tRNA molecules, the mRNA and conformational changes in the ribosome. The polypeptide is Elongation factor G (Desulfitobacterium hafniense (strain DSM 10664 / DCB-2)).